Consider the following 409-residue polypeptide: Arginine biosynthesis bifunctional protein ArgJ (409 aa).

6 residues coordinate substrate: Thr-156, Lys-182, Thr-193, Glu-280, Asn-404, and Ser-409. Catalysis depends on Thr-193, which acts as the Nucleophile.

The protein belongs to the ArgJ family. As to quaternary structure, heterotetramer of two alpha and two beta chains.

Its subcellular location is the cytoplasm. It carries out the reaction N(2)-acetyl-L-ornithine + L-glutamate = N-acetyl-L-glutamate + L-ornithine. The catalysed reaction is L-glutamate + acetyl-CoA = N-acetyl-L-glutamate + CoA + H(+). It functions in the pathway amino-acid biosynthesis; L-arginine biosynthesis; L-ornithine and N-acetyl-L-glutamate from L-glutamate and N(2)-acetyl-L-ornithine (cyclic): step 1/1. Its pathway is amino-acid biosynthesis; L-arginine biosynthesis; N(2)-acetyl-L-ornithine from L-glutamate: step 1/4. Catalyzes two activities which are involved in the cyclic version of arginine biosynthesis: the synthesis of N-acetylglutamate from glutamate and acetyl-CoA as the acetyl donor, and of ornithine by transacetylation between N(2)-acetylornithine and glutamate. In Ralstonia nicotianae (strain ATCC BAA-1114 / GMI1000) (Ralstonia solanacearum), this protein is Arginine biosynthesis bifunctional protein ArgJ.